An 85-amino-acid chain; its full sequence is Dynein light chain 1, cytoplasmic (85 aa).

This sequence belongs to the dynein light chain family. As to quaternary structure, homodimer. Cytoplasmic dynein consists of two catalytic heavy chains (HCs) and a number of non-catalytic subunits which present intermediate chains (ICs), light intermediate chains (LICs) and light chains (LCs). Component of the nuclear pore complex (NPC). NPC constitutes the exclusive means of nucleocytoplasmic transport. NPCs allow the passive diffusion of ions and small molecules and the active, nuclear transport receptor-mediated bidirectional transport of macromolecules such as proteins, RNAs, ribonucleoparticles (RNPs), and ribosomal subunits across the nuclear envelope. Due to its 8-fold rotational symmetry, all subunits are present with 8 copies or multiples thereof.

Its subcellular location is the cytoplasm. The protein resides in the cytoskeleton. It localises to the nucleus. The protein localises to the nuclear pore complex. Functionally, acts as one of several non-catalytic accessory components of the cytoplasmic dynein complex that are thought to be involved in linking dynein to cargos and to adapter proteins that regulate dynein function. Cytoplasmic dynein 1 acts as a motor for the intracellular retrograde motility of vesicles and organelles along microtubules. May play a role in changing or maintaining the spatial distribution of cytoskeletal structures. Also a component of the nuclear pore complex. This chain is Dynein light chain 1, cytoplasmic (dlc2), found in Schizosaccharomyces pombe (strain 972 / ATCC 24843) (Fission yeast).